The sequence spans 686 residues: Ovotransferrin (686 aa).

Transferrin-like domains lie at 7–333 (VRWC…SLRK) and 345–670 (IQWC…SLNT). 6 disulfides stabilise this stretch: Cys10/Cys45, Cys20/Cys36, Cys115/Cys197, Cys160/Cys174, Cys171/Cys182, and Cys228/Cys242. The segment at 333 to 341 (KDQLTVGPR) is connecting region. Disulfide bonds link Cys348–Cys380, Cys358–Cys371, Cys405–Cys680, Cys421–Cys643, Cys454–Cys530, Cys478–Cys671, Cys488–Cys502, Cys499–Cys513, and Cys570–Cys584. Asn473 carries N-linked (GlcNAc...) asparagine glycosylation. Asn548 carries an N-linked (GlcNAc...) asparagine glycan.

It belongs to the transferrin family. In terms of assembly, monomer.

It localises to the secreted. In terms of biological role, transferrins are iron binding transport proteins which can bind two Fe(3+) ions in association with the binding of an anion, usually bicarbonate. It is responsible for the transport of iron from sites of absorption and heme degradation to those of storage and utilization. Serum transferrin may also have a further role in stimulating cell proliferation. Its function is as follows. Ovotransferrin has a bacteriostatic function. Its concentration in avian egg is the highest concentration of any transferrin in vivo. This chain is Ovotransferrin, found in Anas platyrhynchos (Mallard).